A 309-amino-acid chain; its full sequence is MATELQCPDSMPCHNQQVNSASTPSPEQLRPGDLILDHAGGNRASRAKVILLTGYAHSSLPAELDSGACGGSSLNSEGNSGSGDSSSYDAPAGNSFLEDCELSRQIGAQLKLLPMNDQIRELQTIIRDKTASRGDFMFSADRLIRLVVEEGLNQLPYKECMVTTPTGYKYEGVKFEKGNCGVSIMRSGEAMEQGLRDCCRSIRIGKILIQSDEETQRAKVYYAKFPPDIYRRKVLLMYPILSTGNTVIEAVKVLIEHGVQPSVIILLSLFSTPHGAKSIIQEFPEITILTTEVHPVAPTHFGQKYFGTD.

The disordered stretch occupies residues 1 to 38 (MATELQCPDSMPCHNQQVNSASTPSPEQLRPGDLILDH). Polar residues predominate over residues 13 to 26 (CHNQQVNSASTPSP). Ser25 carries the post-translational modification Phosphoserine. Residues Arg133, Arg142, and 176–179 (EKGN) each bind GTP. Arg186 is a binding site for 5-phospho-alpha-D-ribose 1-diphosphate. GTP-binding residues include Arg203 and Arg232. Position 238 to 246 (238 to 246 (YPILSTGNT)) interacts with 5-phospho-alpha-D-ribose 1-diphosphate. 299-301 (THF) is a uracil binding site.

The protein belongs to the UPRTase family. In terms of tissue distribution, highly expressed in leukocytes, liver, spleen and thymus, with lower expression in brain, lung and skeletal muscle.

Its subcellular location is the cytoplasm. The protein resides in the nucleus. The chain is Uracil phosphoribosyltransferase homolog (UPRT) from Homo sapiens (Human).